The primary structure comprises 514 residues: Adenylosuccinate synthetase 1, chloroplastic (514 aa).

Residues 1–73 (MAMAAAAAVA…AQAIERESVK (73 aa)) constitute a chloroplast transit peptide. GTP is bound by residues 100–106 (GDEGKGK) and 128–130 (GHT). Catalysis depends on Asp-101, which acts as the Proton acceptor. 2 residues coordinate Mg(2+): Asp-101 and Gly-128. Residues 101–104 (DEGK), 126–129 (NAGH), Thr-218, Arg-232, Gln-312, Thr-327, and Arg-391 contribute to the IMP site. The Proton donor role is filled by His-129. Residue 387–393 (TTTGRPR) participates in substrate binding. GTP is bound by residues Arg-393, 419–421 (KLD), and 502–504 (GVG).

This sequence belongs to the adenylosuccinate synthetase family. Homodimer. Requires Mg(2+) as cofactor.

It is found in the plastid. The protein resides in the chloroplast. The enzyme catalyses IMP + L-aspartate + GTP = N(6)-(1,2-dicarboxyethyl)-AMP + GDP + phosphate + 2 H(+). The protein operates within purine metabolism; AMP biosynthesis via de novo pathway; AMP from IMP: step 1/2. In terms of biological role, plays an important role in the de novo pathway and in the salvage pathway of purine nucleotide biosynthesis. Catalyzes the first committed step in the biosynthesis of AMP from IMP. The polypeptide is Adenylosuccinate synthetase 1, chloroplastic (Physcomitrium patens (Spreading-leaved earth moss)).